A 418-amino-acid polypeptide reads, in one-letter code: Trimethyllysine dioxygenase, mitochondrial (418 aa).

The Fe cation site is built by His-239, Asp-241, and His-386.

This sequence belongs to the gamma-BBH/TMLD family. As to quaternary structure, homodimer. The cofactor is Fe(2+). It depends on L-ascorbate as a cofactor.

Its subcellular location is the mitochondrion matrix. The catalysed reaction is N(6),N(6),N(6)-trimethyl-L-lysine + 2-oxoglutarate + O2 = (3S)-3-hydroxy-N(6),N(6),N(6)-trimethyl-L-lysine + succinate + CO2. It functions in the pathway amine and polyamine biosynthesis; carnitine biosynthesis. Its function is as follows. Converts trimethyllysine (TML) into hydroxytrimethyllysine (HTML). The chain is Trimethyllysine dioxygenase, mitochondrial (TMLHE) from Gallus gallus (Chicken).